The sequence spans 474 residues: Proline--tRNA ligase (474 aa).

This sequence belongs to the class-II aminoacyl-tRNA synthetase family. ProS type 3 subfamily. As to quaternary structure, homodimer.

It is found in the cytoplasm. The enzyme catalyses tRNA(Pro) + L-proline + ATP = L-prolyl-tRNA(Pro) + AMP + diphosphate. Catalyzes the attachment of proline to tRNA(Pro) in a two-step reaction: proline is first activated by ATP to form Pro-AMP and then transferred to the acceptor end of tRNA(Pro). This is Proline--tRNA ligase from Mycoplasma capricolum subsp. capricolum (strain California kid / ATCC 27343 / NCTC 10154).